The chain runs to 261 residues: Cytochrome c oxidase subunit 3 (261 aa).

Residues 1-15 (MAHQAHAYHMVDPSP) lie on the Mitochondrial matrix side of the membrane. A helical transmembrane segment spans residues 16 to 34 (WPITGATAALLVTSGLAAW). The Mitochondrial intermembrane portion of the chain corresponds to 35–40 (FHFNSM). A helical transmembrane segment spans residues 41–66 (ILILMGLTLLLLTMYQWWRDIIREST). Residues 67–72 (FQGHHT) lie on the Mitochondrial matrix side of the membrane. Residues 73 to 105 (LPVQKSLRYGMILFITSEVFFFLGFFWAFYHSS) form a helical membrane-spanning segment. Residues 106-128 (LAPTPELGGLWPPTGITPLDPFE) lie on the Mitochondrial intermembrane side of the membrane. A helical transmembrane segment spans residues 129–152 (VPLLNTAVLLASGITVTWAHHSLM). The Mitochondrial matrix portion of the chain corresponds to 153 to 155 (EGQ). Residues 156-183 (RKEAIQSLFITVLLGLYFTALQATEYYE) form a helical membrane-spanning segment. Over 184-190 (SPFTIAD) the chain is Mitochondrial intermembrane. A helical transmembrane segment spans residues 191–223 (GAYGSTFFVATGFHGLHVIIGSTFLIVCLVRQT). Residues 224 to 232 (QYHFTSNHH) lie on the Mitochondrial matrix side of the membrane. A helical membrane pass occupies residues 233–256 (FGFEAAAWYWHFVDVVWLFLYVSI). Residues 257–261 (YWWGS) are Mitochondrial intermembrane-facing.

The protein belongs to the cytochrome c oxidase subunit 3 family. Component of the cytochrome c oxidase (complex IV, CIV), a multisubunit enzyme composed of 14 subunits. The complex is composed of a catalytic core of 3 subunits MT-CO1, MT-CO2 and MT-CO3, encoded in the mitochondrial DNA, and 11 supernumerary subunits COX4I, COX5A, COX5B, COX6A, COX6B, COX6C, COX7A, COX7B, COX7C, COX8 and NDUFA4, which are encoded in the nuclear genome. The complex exists as a monomer or a dimer and forms supercomplexes (SCs) in the inner mitochondrial membrane with NADH-ubiquinone oxidoreductase (complex I, CI) and ubiquinol-cytochrome c oxidoreductase (cytochrome b-c1 complex, complex III, CIII), resulting in different assemblies (supercomplex SCI(1)III(2)IV(1) and megacomplex MCI(2)III(2)IV(2)).

The protein localises to the mitochondrion inner membrane. It catalyses the reaction 4 Fe(II)-[cytochrome c] + O2 + 8 H(+)(in) = 4 Fe(III)-[cytochrome c] + 2 H2O + 4 H(+)(out). Functionally, component of the cytochrome c oxidase, the last enzyme in the mitochondrial electron transport chain which drives oxidative phosphorylation. The respiratory chain contains 3 multisubunit complexes succinate dehydrogenase (complex II, CII), ubiquinol-cytochrome c oxidoreductase (cytochrome b-c1 complex, complex III, CIII) and cytochrome c oxidase (complex IV, CIV), that cooperate to transfer electrons derived from NADH and succinate to molecular oxygen, creating an electrochemical gradient over the inner membrane that drives transmembrane transport and the ATP synthase. Cytochrome c oxidase is the component of the respiratory chain that catalyzes the reduction of oxygen to water. Electrons originating from reduced cytochrome c in the intermembrane space (IMS) are transferred via the dinuclear copper A center (CU(A)) of subunit 2 and heme A of subunit 1 to the active site in subunit 1, a binuclear center (BNC) formed by heme A3 and copper B (CU(B)). The BNC reduces molecular oxygen to 2 water molecules using 4 electrons from cytochrome c in the IMS and 4 protons from the mitochondrial matrix. The protein is Cytochrome c oxidase subunit 3 (MT-CO3) of Latimeria chalumnae (Coelacanth).